Consider the following 243-residue polypeptide: Uridine-cytidine kinase B (243 aa).

22–29 (GGTASGKT) serves as a coordination point for ATP.

Belongs to the uridine kinase family.

The catalysed reaction is uridine + ATP = UMP + ADP + H(+). It carries out the reaction cytidine + ATP = CMP + ADP + H(+). It functions in the pathway pyrimidine metabolism; CTP biosynthesis via salvage pathway; CTP from cytidine: step 1/3. The protein operates within pyrimidine metabolism; UMP biosynthesis via salvage pathway; UMP from uridine: step 1/1. Functionally, catalyzes the conversion of uridine into uridine monophosphate and cytidine into cytidine monophosphate in the pyrimidine salvage pathway. This Dictyostelium discoideum (Social amoeba) protein is Uridine-cytidine kinase B (udkB).